Reading from the N-terminus, the 166-residue chain is Small ribosomal subunit protein uS5 (166 aa).

The 64-residue stretch at 11–74 (LEDRVVAINR…EDAKKNLVEV (64 aa)) folds into the S5 DRBM domain.

This sequence belongs to the universal ribosomal protein uS5 family. As to quaternary structure, part of the 30S ribosomal subunit. Contacts proteins S4 and S8.

In terms of biological role, with S4 and S12 plays an important role in translational accuracy. Located at the back of the 30S subunit body where it stabilizes the conformation of the head with respect to the body. This chain is Small ribosomal subunit protein uS5, found in Enterococcus faecalis (strain ATCC 700802 / V583).